The primary structure comprises 14507 residues: Mucin-16 (14507 aa).

Low complexity predominate over residues 1-17 (MLKPSGLPGSSSPTRSL). The segment at 1–138 (MLKPSGLPGS…PRTRTSSTEG (138 aa)) is disordered. Topologically, residues 1-14451 (MLKPSGLPGS…EPLTGNSDLP (14451 aa)) are extracellular. Composition is skewed to polar residues over residues 35 to 46 (TGATLSPKTSTG) and 56 to 138 (PFTS…STEG). Asn139 is a glycosylation site (N-linked (GlcNAc...) asparagine). Disordered regions lie at residues 160–180 (EKYT…ETPW), 198–229 (DSTA…TNPS), 265–287 (FSSP…LSSS), 396–554 (LGGT…STSV), 655–674 (VSKT…SYTM), 695–719 (SLGL…GHTK), and 740–888 (TSTF…RTTL). Low complexity predominate over residues 166–178 (TETSTTEGDSTET). A compositionally biased stretch (polar residues) spans 212-229 (PAETTVTDSHTPGRTNPS). 2 stretches are compositionally biased toward low complexity: residues 276 to 287 (SRISTSAPLSSS) and 396 to 413 (LGGT…STTL). Polar residues-rich tracts occupy residues 414 to 423 (VSEETNTHHS), 431 to 441 (GTLNTSMTPLE), and 460 to 478 (GFTT…SSSH). Asn434 carries N-linked (GlcNAc...) asparagine glycosylation. Composition is skewed to low complexity over residues 485-497 (TTGS…SSST) and 508-525 (ATTS…ESTA). The span at 526-543 (QQFSEPQHTQWVETSPSM) shows a compositional bias: polar residues. Composition is skewed to polar residues over residues 696–706 (LGLTPLNTRHP), 740–780 (TSTF…NAAT), 787–796 (NATSPLTHPS), and 805–821 (SVLT…SPNI). An N-linked (GlcNAc...) asparagine glycan is attached at Asn787. The span at 823-846 (PTGTLTSESSESPSTLSLPSVSGV) shows a compositional bias: low complexity. Composition is skewed to polar residues over residues 847–860 (KTTF…THLF) and 869–888 (TSNP…RTTL). N-linked (GlcNAc...) asparagine glycans are attached at residues Asn930 and Asn957. Composition is skewed to polar residues over residues 949-969 (SQTN…TWPE), 1092-1101 (GSSTPGRTSQ), 1124-1137 (GTSS…TATH), and 1301-1317 (SGSS…NTGS). Disordered stretches follow at residues 949-981 (SQTN…LPSA), 1082-1101 (VSPS…RTSQ), 1121-1149 (PRDG…ARST), 1301-1378 (SGSS…NLTS), 1593-1641 (LGTQ…SSSS), and 1704-1757 (LSES…SPTT). The span at 1318–1328 (TWDPTTYITTT) shows a compositional bias: low complexity. Polar residues-rich tracts occupy residues 1334 to 1347 (SSAQ…VRTL), 1368 to 1378 (PKISSSPNLTS), 1596 to 1613 (QGRS…STDT), 1621 to 1633 (GPTN…PMDN), and 1704 to 1745 (LSES…GSQM). An N-linked (GlcNAc...) asparagine glycan is attached at Asn1375. An N-linked (GlcNAc...) asparagine glycan is attached at Asn1633. Residues 1746–1757 (STSIPLTSSPTT) show a composition bias toward low complexity. N-linked (GlcNAc...) asparagine glycans are attached at residues Asn1840, Asn1877, and Asn1890. The segment covering 1846-1908 (DLSHGVHTSS…TEKSEVSSSI (63 aa)) has biased composition (polar residues). Disordered stretches follow at residues 1846–1930 (DLSH…PGNR), 2010–2033 (VSAS…YSSA), 2064–2140 (WPST…GASI), and 2153–2177 (RSDV…SAGT). 2 stretches are compositionally biased toward low complexity: residues 2019–2033 (SVSS…YSSA) and 2064–2085 (WPST…NPSS). Residues 2111–2132 (HGPQNTAASTLNTDASSVTGLS) are compositionally biased toward polar residues. N-linked (GlcNAc...) asparagine glycosylation is found at Asn2345 and Asn2375. Disordered regions lie at residues 2393–2455 (PTSI…PFTI) and 2566–2591 (SESK…ETSA). Composition is skewed to low complexity over residues 2417–2429 (TSTT…TSPS) and 2566–2583 (SESK…TPTS). A glycan (N-linked (GlcNAc...) asparagine) is linked at Asn2737. 10 disordered regions span residues 2789 to 2822 (TTGS…LTMN), 2838 to 2885 (TATQ…TWGI), 2901 to 3006 (DTKS…AMTS), 3019 to 3052 (TGQA…TSRK), 3083 to 3148 (TLNM…ASSI), 3172 to 3235 (SQAA…PETT), 3251 to 3276 (ALGS…PTEN), 3299 to 3392 (GTPG…KTET), 3415 to 3436 (TSRS…TSGS), and 3462 to 3491 (VSLP…VTSP). Over residues 2803-2819 (SGSTHSTGTKTFSSLPL) the composition is skewed to polar residues. A compositionally biased stretch (low complexity) spans 2864 to 2875 (SASSSPSKAFAS). 2 stretches are compositionally biased toward polar residues: residues 2876–2885 (LTTAPPTWGI) and 2901–2918 (DTKS…NTIP). The span at 2919-2931 (DSDASTASSSLSK) shows a compositional bias: low complexity. The span at 2942 to 2968 (MTSTKAISASSFQSTGFTETPEGSASP) shows a compositional bias: polar residues. The span at 3019 to 3035 (TGQAARSGSSSSPISLS) shows a compositional bias: low complexity. Residues 3041-3052 (SFLSPTASTSRK) show a composition bias toward polar residues. N-linked (GlcNAc...) asparagine glycosylation occurs at Asn3085. Residues 3107-3116 (TAETQTLTFT) show a composition bias toward low complexity. 2 stretches are compositionally biased toward polar residues: residues 3117–3132 (PSET…SPTE) and 3172–3181 (SQAAQGNSTW). Residue Asn3178 is glycosylated (N-linked (GlcNAc...) asparagine). The segment covering 3188 to 3200 (TGSSPAGTSPGSP) has biased composition (low complexity). Polar residues-rich tracts occupy residues 3201-3214 (EMST…SKEP) and 3251-3261 (ALGSGSTSISH). Over residues 3263–3274 (PTGTTSPTKSPT) the composition is skewed to low complexity. 2 stretches are compositionally biased toward polar residues: residues 3299-3342 (GTPG…TTGM) and 3360-3383 (VSLS…SSLT). Composition is skewed to low complexity over residues 3424-3436 (SSTS…TSGS) and 3477-3491 (PSGG…VTSP). N-linked (GlcNAc...) asparagine glycosylation is present at Asn3501. Residues 3538–3555 (ISTTITTMGTNSISTTTP) are compositionally biased toward low complexity. 8 disordered regions span residues 3538-3588 (ISTT…STAA), 3644-3672 (TPSS…TAST), 3794-3829 (RSSG…GQVP), 3843-3879 (AKTP…TPSA), 3914-3982 (LESG…SPVV), 4024-4056 (MDTS…SSKR), 4094-4121 (AMQT…WTGT), and 4138-4166 (FSKG…VPIH). Composition is skewed to polar residues over residues 3812-3824 (QTST…TSAH) and 3848-3868 (ATFQ…TSDS). Low complexity predominate over residues 3916-3927 (SGTTSSPSWKSS). Residues 3946-3982 (PSTNTVETTGWVTSSEHASHSTIPAHSASSKLTSPVV) show a composition bias toward polar residues. Low complexity predominate over residues 4026–4041 (TSSTTQTSIISSPGST). The segment covering 4095–4121 (MQTSPPGATSLSAPTLDTSATASWTGT) has biased composition (polar residues). Residues 4152 to 4164 (SVEETSSSSSLVP) are compositionally biased toward low complexity. Asn4220, Asn4498, Asn4606, Asn4613, and Asn4624 each carry an N-linked (GlcNAc...) asparagine glycan. 3 disordered regions span residues 4728 to 4748 (VKDV…PSSQ), 4845 to 4961 (HSTV…TRLS), and 5026 to 5066 (VSWT…KLSS). Positions 4856-4876 (KVTSPNVTTSTMEDTTISRSI) are enriched in polar residues. Asn4861 is a glycosylation site (N-linked (GlcNAc...) asparagine). Low complexity-rich tracts occupy residues 4877-4914 (PKSS…ETST) and 4924-4939 (TTEV…SSTS). Polar residues-rich tracts occupy residues 4944-4961 (DQST…TRLS) and 5026-5037 (VSWTSPPSVDKT). The segment covering 5038–5047 (SSPSSFLSSP) has biased composition (low complexity). Polar residues predominate over residues 5048-5059 (AMTTPSLISSTL). N-linked (GlcNAc...) asparagine glycans are attached at residues Asn5096, Asn5131, and Asn5228. 3 disordered regions span residues 5128-5149 (VKAN…ETPK), 5221-5249 (EVSS…DTFT), and 5271-5303 (TQAS…TVTQ). A compositionally biased stretch (polar residues) spans 5221–5234 (EVSSTGVNSSSKIS). The span at 5280–5293 (SHSTLPLDTSTTLS) shows a compositional bias: low complexity. Polar residues predominate over residues 5294–5303 (QGGTHSTVTQ). Residue Asn5320 is glycosylated (N-linked (GlcNAc...) asparagine). Disordered stretches follow at residues 5328 to 5365 (PVEE…PLPV), 5381 to 5400 (GTTS…SITH), 5426 to 5507 (NVGT…TNTA), 5519 to 5538 (ASRT…DRPT), 5624 to 5654 (PVEE…ESIP), 5675 to 5696 (LGTT…PTQE), and 5727 to 5747 (ISGH…KATS). Composition is skewed to low complexity over residues 5333 to 5365 (SSVS…PLPV) and 5381 to 5393 (GTTS…SSPP). Residue Asn5394 is glycosylated (N-linked (GlcNAc...) asparagine). Composition is skewed to polar residues over residues 5426-5441 (NVGT…SSVL) and 5447-5485 (SKAT…TASL). Asn5470 carries an N-linked (GlcNAc...) asparagine glycan. Composition is skewed to low complexity over residues 5495 to 5504 (SEKTSSTTET), 5520 to 5532 (SRTE…TSIS), 5633 to 5654 (SLMS…ESIP), and 5675 to 5688 (LGTT…SSPP). Asn5689 carries N-linked (GlcNAc...) asparagine glycosylation. Positions 5727–5737 (ISGHESQSSVP) are enriched in polar residues. Residue Asn5863 is glycosylated (N-linked (GlcNAc...) asparagine). Disordered stretches follow at residues 5882-5931 (STAS…SSPV) and 6054-6078 (STST…TPEL). The segment covering 5903-5916 (TTTMSRSTKGVSWQ) has biased composition (polar residues). Residues 5917-5928 (SPPSVEETSSPS) show a composition bias toward low complexity. A compositionally biased stretch (polar residues) spans 6054–6063 (STSTPGSPET). A glycan (N-linked (GlcNAc...) asparagine) is linked at Asn6088. Disordered regions lie at residues 6122 to 6149 (PASA…PLTI), 6219 to 6251 (NSLS…LVSV), 6399 to 6425 (SRTE…DTST), 6438 to 6459 (TKSE…SQGT), 6497 to 6545 (ISGT…TSLP), and 6682 to 6714 (TTGA…PDIS). 3 stretches are compositionally biased toward low complexity: residues 6134 to 6149 (SPEA…PLTI), 6226 to 6251 (PLLV…LVSV), and 6399 to 6410 (SRTELTSSSRTS). 2 stretches are compositionally biased toward polar residues: residues 6411-6425 (IQGT…DTST) and 6445-6459 (IATQ…SQGT). Residues 6500 to 6523 (TSPPSVEKTSSSSSLLSLPAITSP) are compositionally biased toward low complexity. 2 stretches are compositionally biased toward polar residues: residues 6530–6545 (LPES…TSLP) and 6683–6699 (TGAT…SRRT). N-linked (GlcNAc...) asparagine glycosylation is present at Asn6732. 3 disordered regions span residues 6800-6822 (SFSS…TLPK), 6845-6865 (TLGT…STSH), and 6886-6939 (TAAT…SETT). A compositionally biased stretch (low complexity) spans 6848–6864 (TSPEPTTSSPPNLSSTS). Asn6859 is a glycosylation site (N-linked (GlcNAc...) asparagine). Over residues 6886–6905 (TAATNVETTSSGHGSQSSVL) the composition is skewed to polar residues. Residues 6919–6938 (TTSTMGHTTVSTSMSVSSET) show a composition bias toward low complexity. Residue Asn6961 is glycosylated (N-linked (GlcNAc...) asparagine). Disordered regions lie at residues 6981 to 7004 (AEVS…QSTV), 7028 to 7107 (MTIP…ATTS), 7143 to 7208 (TSPE…TSKA), 7279 to 7302 (SRTE…MLPE), 7320 to 7345 (ESSE…TLDT), 7360 to 7427 (QRLP…SLLT), 7437 to 7456 (LDAS…STSV), 7463 to 7503 (EVTT…ETTK), 7527 to 7553 (SNTR…SEET), 7577 to 7597 (TEAI…TMSQ), 7726 to 7782 (ATTT…TTSS), 7825 to 7849 (LASS…TKMS), 7908 to 7927 (HTSP…TSST), and 7970 to 8000 (PSFS…SPLP). A compositionally biased stretch (polar residues) spans 7028–7038 (MTIPTQTGPSG). Low complexity predominate over residues 7039-7055 (STSQDTLTLDTSTTKSQ). The span at 7057–7075 (KTHSTLTQRFPHSEMTTLM) shows a compositional bias: polar residues. Residues 7086–7105 (SSPSLENPSSLPSLLSLPAT) show a composition bias toward low complexity. Over residues 7166 to 7200 (GKDTTNTEAVHPSTNTAASNVEIPSSGHESPSSAL) the composition is skewed to polar residues. A compositionally biased stretch (low complexity) spans 7279–7298 (SRTEVTSSSRTSISGSAEST). 3 stretches are compositionally biased toward polar residues: residues 7322-7345 (SEMT…TLDT), 7360-7371 (QRLPHSEITTLV), and 7390-7402 (SPPS…SAMI). Low complexity-rich tracts occupy residues 7403–7427 (SPSP…SLLT) and 7439–7455 (ASAE…SSTS). The span at 7474 to 7484 (FSNTAVTKVGT) shows a compositional bias: polar residues. Low complexity predominate over residues 7485–7494 (SSSGHESPSS). The span at 7733–7749 (GTSTEPGTSSSSSLSTT) shows a compositional bias: low complexity. Positions 7750-7765 (SHERLTTYKDTAHTEA) are enriched in basic and acidic residues. Polar residues predominate over residues 7768-7782 (PSTNTGGTNVATTSS). 3 stretches are compositionally biased toward low complexity: residues 7835 to 7846 (ESSGSEGTSSGT), 7915 to 7927 (TTQG…TSST), and 7973 to 8000 (SLMS…SPLP). N-linked (GlcNAc...) asparagine glycans are attached at residues Asn8029 and Asn8055. Disordered regions lie at residues 8042–8078 (EVTT…LADS), 8111–8134 (IQTE…GTSL), 8312–8331 (GISR…TSHE), 8342–8389 (TEDM…YTMG), 8411–8472 (TSSL…ISPD), 8604–8624 (MLRT…STSA), 8674–8741 (SPMA…TKVS), and 8775–8880 (TPLT…HSSP). A compositionally biased stretch (polar residues) spans 8052–8078 (PSSNRTVTDVGTSSSGHESTSFVLADS). Low complexity predominate over residues 8319-8328 (TSSTSNLSST). N-linked (GlcNAc...) asparagine glycosylation is present at Asn8324. Residues 8345–8389 (MQPSTHTAVTNVRTSISGHESQSSVLSDSETPKATSPMGTTYTMG) show a composition bias toward polar residues. The span at 8607 to 8624 (TSSEPETSSPPNLSSTSA) shows a compositional bias: low complexity. Residues Asn8618 and Asn8684 are each glycosylated (N-linked (GlcNAc...) asparagine). Composition is skewed to polar residues over residues 8674-8740 (SPMA…TTKV) and 8781-8810 (GSAE…SSRA). Low complexity predominate over residues 8850–8880 (TSPPSSLVSLSAVTSPSPLYSTPSESSHSSP). An N-linked (GlcNAc...) asparagine glycan is attached at Asn8913. 2 disordered regions span residues 8995–9018 (ESTS…SATK) and 9147–9168 (SLSS…DSIH). The N-linked (GlcNAc...) asparagine glycan is linked to Asn9202. The segment covering 9294 to 9307 (SISEETSSATEKST) has biased composition (low complexity). Positions 9294–9460 (SISEETSSAT…TPSGSSHSSP (167 aa)) are disordered. Polar residues-rich tracts occupy residues 9308–9357 (VLSS…STPL) and 9374–9412 (SGAT…TTPM). Positions 9431 to 9460 (SPPSSLVSSSSVTSPSPLYSTPSGSSHSSP) are enriched in low complexity. N-linked (GlcNAc...) asparagine glycosylation is present at Asn9493. 4 disordered regions span residues 9611-9635 (ATPE…AQST), 9726-9753 (SSSS…SPSS), 9771-9791 (VLDT…STSV), and 9869-9890 (TEPT…ETTS). A compositionally biased stretch (polar residues) spans 9621–9635 (MPSSRTSIPGPAQST). Composition is skewed to low complexity over residues 9774-9790 (TSSE…SSTS) and 9881-9890 (ETSTSEETTS). An N-linked (GlcNAc...) asparagine glycan is attached at Asn9785. Asn10075 and Asn10173 each carry an N-linked (GlcNAc...) asparagine glycan. 2 disordered regions span residues 10175 to 10218 (SLDT…PPAS) and 10445 to 10469 (TIRP…TGGT). A compositionally biased stretch (low complexity) spans 10178–10193 (TSSVTPTNTPSSPGST). Residues 10194-10212 (HLLQSSKTDFTSSAKTSSP) show a composition bias toward polar residues. N-linked (GlcNAc...) asparagine glycosylation is present at Asn10510. Residues 10544–10573 (SLGAETSTALPRTTPSVFNRESETTASLVS) are compositionally biased toward polar residues. Disordered regions lie at residues 10544 to 10590 (SLGA…DVSS) and 10689 to 10719 (ETSS…PGAE). An N-linked (GlcNAc...) asparagine glycan is attached at Asn10700. Residues 10708 to 10719 (ATPSIATSPGAE) show a composition bias toward polar residues. Asn10749 is a glycosylation site (N-linked (GlcNAc...) asparagine). Polar residues predominate over residues 10849 to 10860 (TTPSMTTSHGAE). Disordered stretches follow at residues 10849 to 10872 (TTPS…TVST), 10898 to 10926 (LSPG…TPTV), and 11003 to 11036 (LPTL…TVSP). The segment covering 10861–10872 (SSSAVPTPTVST) has biased composition (low complexity). Low complexity predominate over residues 11003–11018 (LPTLTLSPGEPETTPS). N-linked (GlcNAc...) asparagine glycosylation occurs at Asn11053. Positions 11072-11092 (SMATSHGAEASSAVPTPTVSP) are disordered. 2 N-linked (GlcNAc...) asparagine glycosylation sites follow: Asn11224 and Asn11263. Polar residues-rich tracts occupy residues 11269–11284 (HPAE…TSRF) and 11358–11381 (STTV…SIAT). 6 disordered regions span residues 11269 to 11301 (HPAE…SPEA), 11358 to 11400 (STTV…SPDV), 11508 to 11537 (KFSH…STTT), 11583 to 11724 (ETST…TSPR), 11836 to 11861 (SPTA…TSTM), and 11913 to 11937 (QTVT…FSRT). Asn11367 is a glycosylation site (N-linked (GlcNAc...) asparagine). Composition is skewed to polar residues over residues 11583–11594 (ETSTTVSGTIPN), 11631–11651 (VTSQ…TLTP), and 11658–11672 (TTAS…QTGF). Asn11594 carries N-linked (GlcNAc...) asparagine glycosylation. The span at 11700 to 11717 (PVSRTTSSFSHSSPDATP) shows a compositional bias: low complexity. Polar residues-rich tracts occupy residues 11849–11861 (PLST…TSTM) and 11913–11928 (QTVT…SVTS). A run of 12 repeats spans residues 12067 to 12223 (AATV…PSPT), 12224 to 12381 (TAGP…PTIM), 12382 to 12537 (AAGP…PSPA), 12538 to 12692 (TAGP…PSPT), 12693 to 12848 (TAGP…PSPT), 12849 to 13004 (SAGP…PSPT), 13005 to 13160 (TAVP…PSPT), 13161 to 13316 (TTGP…PGPT), 13317 to 13472 (ATGP…SGPM), 13473 to 13628 (TASP…PGPS), 13629 to 13784 (AASP…FGPS), and 13785 to 13939 (AASH…RYMA). Positions 12067–13939 (AATVPFMVPF…FTINNLRYMA (1873 aa)) are 12 X approximate tandem repeats. The region spanning 12072–12193 (FMVPFTLNFT…NSLYVNGFTH (122 aa)) is the SEA 1 domain. Asn12079, Asn12100, and Asn12116 each carry an N-linked (GlcNAc...) asparagine glycan. A disulfide bond links Cys12126 and Cys12146. Asn12168 carries an N-linked (GlcNAc...) asparagine glycan. The disordered stretch occupies residues 12196-12226 (SMPTTSTPGTSTVDVGTSGTPSSSPSPTTAG). The 122-residue stretch at 12228-12349 (LLMPFTLNFT…NSLYVNGFTH (122 aa)) folds into the SEA 2 domain. Asn12235 and Asn12272 each carry an N-linked (GlcNAc...) asparagine glycan. Cysteines 12282 and 12302 form a disulfide. The tract at residues 12353–12376 (VSTTSTPGTSTVDLRTSGTPSSLS) is disordered. SEA domains lie at 12386 to 12507 (LLVP…GFTH), 12542 to 12663 (LLVL…GFTH), and 12697 to 12818 (LLVP…GFTH). N-linked (GlcNAc...) asparagine glycosylation is found at Asn12393, Asn12414, and Asn12430. The cysteines at positions 12440 and 12460 are disulfide-linked. Residues Asn12549, Asn12570, and Asn12586 are each glycosylated (N-linked (GlcNAc...) asparagine). A disulfide bridge connects residues Cys12596 and Cys12616. 3 N-linked (GlcNAc...) asparagine glycosylation sites follow: Asn12704, Asn12725, and Asn12741. A disulfide bond links Cys12751 and Cys12771. The span at 12819 to 12834 (QTSAPNTSTPGTSTVD) shows a compositional bias: polar residues. A disordered region spans residues 12819-12849 (QTSAPNTSTPGTSTVDLGTSGTPSSLPSPTS). A glycan (N-linked (GlcNAc...) asparagine) is linked at Asn12824. A compositionally biased stretch (low complexity) spans 12835–12849 (LGTSGTPSSLPSPTS). In terms of domain architecture, SEA 6 spans 12853 to 12974 (LLVPFTLNFT…NSLYVNGFTH (122 aa)). Asn12860, Asn12881, and Asn12897 each carry an N-linked (GlcNAc...) asparagine glycan. Cys12907 and Cys12927 are oxidised to a cystine. Residues 12978 to 12990 (VAPTSTPGTSTVD) are compositionally biased toward polar residues. Residues 12978–13003 (VAPTSTPGTSTVDLGTSGTPSSLPSP) form a disordered region. Positions 12991–13003 (LGTSGTPSSLPSP) are enriched in low complexity. SEA domains lie at 13009–13130 (LLVP…GFTH) and 13165–13286 (LLVP…GFTQ). Residues Asn13016, Asn13037, and Asn13053 are each glycosylated (N-linked (GlcNAc...) asparagine). The cysteines at positions 13063 and 13083 are disulfide-linked. Residues Asn13172 and Asn13193 are each glycosylated (N-linked (GlcNAc...) asparagine). A disulfide bridge connects residues Cys13219 and Cys13239. Polar residues predominate over residues 13291 to 13313 (PTTSTPGTFTVQPETSETPSSLP). The interval 13291 to 13317 (PTTSTPGTFTVQPETSETPSSLPGPTA) is disordered. SEA domains are found at residues 13321–13442 (VLLP…GFTH) and 13477–13598 (LLVL…GFTQ). Residues Asn13328, Asn13349, and Asn13365 are each glycosylated (N-linked (GlcNAc...) asparagine). The cysteines at positions 13375 and 13395 are disulfide-linked. Asn13484, Asn13505, and Asn13521 each carry an N-linked (GlcNAc...) asparagine glycan. Cys13531 and Cys13551 are joined by a disulfide. The span at 13603-13621 (PTTSIPGTPTVDLGTSGTP) shows a compositional bias: polar residues. The disordered stretch occupies residues 13603 to 13625 (PTTSIPGTPTVDLGTSGTPVSKP). SEA domains follow at residues 13633–13754 (LLVL…GFTH), 13789–13909 (LLIL…GFTH), 13922–14043 (SEEP…GYNE), and 14073–14193 (HLKT…GYAP). Asn13640 and Asn13661 each carry an N-linked (GlcNAc...) asparagine glycan. Cys13687 and Cys13707 are oxidised to a cystine. Residues Asn13733, Asn13744, Asn13796, Asn13816, Asn13832, Asn13929, and Asn13950 are each glycosylated (N-linked (GlcNAc...) asparagine). The cysteines at positions 13976 and 13996 are disulfide-linked. Residues Asn14080 and Asn14100 are each glycosylated (N-linked (GlcNAc...) asparagine). A disulfide bond links Cys14126 and Cys14146. 6 N-linked (GlcNAc...) asparagine glycosylation sites follow: Asn14195, Asn14212, Asn14254, Asn14287, Asn14326, and Asn14363. SEA domains are found at residues 14198–14309 (IRGE…EMES) and 14319–14438 (STQH…GYSP). Cysteines 14373 and 14393 form a disulfide. N-linked (GlcNAc...) asparagine glycans are attached at residues Asn14417 and Asn14423. The chain crosses the membrane as a helical span at residues 14452–14472 (FWAVILIGLAGLLGVITCLIC). Residues 14473–14507 (GVLVTTRRRKKEGEYNVQQQCPGYYQSHLDLEDLQ) are Cytoplasmic-facing.

Binds to MSLN. Binding to MSLN mediates heterotypic cell adhesion. This may contribute to the metastasis of ovarian cancer to the peritoneum by initiating cell attachment to the mesothelial epithelium via binding to MSLN. Post-translationally, heavily O-glycosylated; expresses both type 1 and type 2 core glycans. Heavily N-glycosylated; expresses primarily high mannose and complex bisecting type N-linked glycans. In terms of processing, may be phosphorylated. Phosphorylation of the intracellular C-terminal domain may induce proteolytic cleavage and the liberation of the extracellular domain into the extracellular space. Post-translationally, may contain numerous disulfide bridges. Association of several molecules of the secreted form may occur through interchain disulfide bridges providing an extraordinarily large gel-like matrix in the extracellular space or in the lumen of secretory ducts. In terms of tissue distribution, expressed in corneal and conjunctival epithelia (at protein level). Overexpressed in ovarian carcinomas and ovarian low malignant potential (LMP) tumors as compared to the expression in normal ovarian tissue and ovarian adenomas.

The protein localises to the cell membrane. The protein resides in the secreted. Its subcellular location is the extracellular space. Functionally, thought to provide a protective, lubricating barrier against particles and infectious agents at mucosal surfaces. In Homo sapiens (Human), this protein is Mucin-16.